A 156-amino-acid chain; its full sequence is Small ribosomal subunit protein uS7 (156 aa).

It belongs to the universal ribosomal protein uS7 family. As to quaternary structure, part of the 30S ribosomal subunit. Contacts proteins S9 and S11.

One of the primary rRNA binding proteins, it binds directly to 16S rRNA where it nucleates assembly of the head domain of the 30S subunit. Is located at the subunit interface close to the decoding center, probably blocks exit of the E-site tRNA. The polypeptide is Small ribosomal subunit protein uS7 (Clostridium kluyveri (strain NBRC 12016)).